The primary structure comprises 457 residues: Exodeoxyribonuclease 7 large subunit (457 aa).

This sequence belongs to the XseA family. As to quaternary structure, heterooligomer composed of large and small subunits.

The protein localises to the cytoplasm. The enzyme catalyses Exonucleolytic cleavage in either 5'- to 3'- or 3'- to 5'-direction to yield nucleoside 5'-phosphates.. In terms of biological role, bidirectionally degrades single-stranded DNA into large acid-insoluble oligonucleotides, which are then degraded further into small acid-soluble oligonucleotides. The protein is Exodeoxyribonuclease 7 large subunit of Citrobacter koseri (strain ATCC BAA-895 / CDC 4225-83 / SGSC4696).